A 404-amino-acid chain; its full sequence is Cysteine desulfurase IscS (404 aa).

Pyridoxal 5'-phosphate-binding positions include 73-74, N153, Q181, and 201-203; these read AT and SAH. K204 carries the N6-(pyridoxal phosphate)lysine modification. Position 241 (T241) interacts with pyridoxal 5'-phosphate. The Cysteine persulfide intermediate role is filled by C327. Residue C327 coordinates [2Fe-2S] cluster.

Belongs to the class-V pyridoxal-phosphate-dependent aminotransferase family. NifS/IscS subfamily. As to quaternary structure, homodimer. Forms a heterotetramer with IscU, interacts with other sulfur acceptors. Pyridoxal 5'-phosphate serves as cofactor.

It localises to the cytoplasm. It carries out the reaction (sulfur carrier)-H + L-cysteine = (sulfur carrier)-SH + L-alanine. It functions in the pathway cofactor biosynthesis; iron-sulfur cluster biosynthesis. Master enzyme that delivers sulfur to a number of partners involved in Fe-S cluster assembly, tRNA modification or cofactor biosynthesis. Catalyzes the removal of elemental sulfur atoms from cysteine to produce alanine. Functions as a sulfur delivery protein for Fe-S cluster synthesis onto IscU, an Fe-S scaffold assembly protein, as well as other S acceptor proteins. In Anaeromyxobacter sp. (strain K), this protein is Cysteine desulfurase IscS.